The following is a 240-amino-acid chain: Fibronectin type III domain-containing protein 5 (240 aa).

Positions 1–10 (MQAARGGAGR) are enriched in gly residues. Residues 1–33 (MQAARGGAGRPGREGRGLERECERSPGPGVAMP) form a disordered region. The span at 11-24 (PGREGRGLERECER) shows a compositional bias: basic and acidic residues. One can recognise a Fibronectin type-III domain in the interval 64 to 155 (APVNVTVRHL…EPVLFKTPRE (92 aa)). Residues N67 and N112 are each glycosylated (N-linked (GlcNAc...) asparagine). A helical membrane pass occupies residues 181–201 (GEVLIIVVVLFMWAGVIALFC). Over residues 210–221 (NEPNNNKEKTKS) the composition is skewed to basic and acidic residues. The tract at residues 210–240 (NEPNNNKEKTKSASETSTPEHQGGGLLRSKI) is disordered. Over residues 231 to 240 (QGGGLLRSKI) the composition is skewed to gly residues. The short motif at 238–240 (SKI) is the Microbody targeting signal element.

In terms of assembly, dimer; may exist in other oligomeric forms. In terms of processing, the extracellular domain is cleaved and released from the cell membrane. N-Glycosylated. In terms of tissue distribution, in adult, it is highly expressed in skeletal muscle, heart and brain.

The protein resides in the cell membrane. Its subcellular location is the peroxisome membrane. The protein localises to the secreted. Its function is as follows. Mediates beneficial effects of muscular exercise. Induces browning of white adipose tissue by stimulating UCP1 expression, at least in part, via the nuclear receptor PPARA. The polypeptide is Fibronectin type III domain-containing protein 5 (Fndc5) (Mus musculus (Mouse)).